Here is a 155-residue protein sequence, read N- to C-terminus: RNA pyrophosphohydrolase (155 aa).

Residues 5-147 enclose the Nudix hydrolase domain; it reads KYRPNVAAII…KRQVYRQVIA (143 aa). A Nudix box motif is present at residues 42–63; the sequence is GGIDEGETPLEALHRELLEEIG.

The protein belongs to the Nudix hydrolase family. RppH subfamily. A divalent metal cation is required as a cofactor.

Its function is as follows. Accelerates the degradation of transcripts by removing pyrophosphate from the 5'-end of triphosphorylated RNA, leading to a more labile monophosphorylated state that can stimulate subsequent ribonuclease cleavage. The protein is RNA pyrophosphohydrolase of Helicobacter pylori (strain ATCC 700392 / 26695) (Campylobacter pylori).